Here is a 745-residue protein sequence, read N- to C-terminus: Pentatricopeptide repeat-containing protein At1g71420 (745 aa).

PPR repeat units follow at residues 58-88 (SQQA…MLSH), 95-125 (NVIL…MPER), 126-160 (NVVS…CFPN), 191-224 (SIYV…IKFK), 225-259 (NLVT…GVGF), 260-296 (DRAT…TVKS), 301-332 (QTEV…MSHC), 334-367 (DIVA…KLSP), 368-402 (DWYT…GFLA), 403-437 (DTVL…DVVS), 438-464 (WNSM…MDIN), 466-496 (DSAT…MFEK), and 502-532 (QLNH…MPMD). The type E motif stretch occupies residues 537–613 (VWIALLGSCR…EPDLSWTEIG (77 aa)). The interval 614 to 644 (NKVHEFASGGRHRPDKEAVYRELKRLISWLK) is type E(+) motif. The type DYW motif stretch occupies residues 645–745 (EMGYVPEMRS…DSSCSCNDYW (101 aa)).

The protein belongs to the PPR family. PCMP-H subfamily.

In Arabidopsis thaliana (Mouse-ear cress), this protein is Pentatricopeptide repeat-containing protein At1g71420 (PCMP-H70).